Reading from the N-terminus, the 1051-residue chain is Kinesin-like protein KIN-UC (1051 aa).

3 stretches are compositionally biased toward low complexity: residues 1–12 (MSSSNSSSAVRS), 28–39 (NSNHAVSLSSSS), and 64–90 (SASSSSSSSSVSASSPSTRRSGTPVRR). 2 disordered regions span residues 1–39 (MSSSNSSSAVRSSAKHAAERIQQHLPPNSNHAVSLSSSS) and 51–109 (PGIA…RVSV). The Kinesin motor domain occupies 104-441 (RVRVSVRVRP…IMFGQRAMKI (338 aa)). 189–196 (GQTGTGKT) serves as a coordination point for ATP. The short motif at 411 to 419 (RTSLIITIG) is the D-BOX element. Coiled coils occupy residues 452–534 (DYES…QKDQ) and 568–761 (DTSQ…KRYM). Over residues 753-766 (NVVEEKRYMKEDLS) the composition is skewed to basic and acidic residues. Residues 753-788 (NVVEEKRYMKEDLSKGSAESGAQTGSQRSQGLKKSL) are disordered. The segment covering 772 to 788 (SGAQTGSQRSQGLKKSL) has biased composition (polar residues). ARM repeat units lie at residues 792–831 (RATMARLCEEVGIQKILQLIKSEDLEVQIQAVKVVANLAA), 833–873 (EANQ…NLAM), and 875–915 (EKSQ…NLCG). One copy of the ARM 4; degenerate repeat lies at 917–956 (EKFLKLLKEEEGIKGLLTMAQSGNIDIIAQVARGMANFAK).

The protein belongs to the TRAFAC class myosin-kinesin ATPase superfamily. Kinesin family. Ungrouped subfamily. In terms of assembly, interacts (via C-terminus) with NEK5. In terms of tissue distribution, expressed in young root hair-forming cells and in root hair-producing cells at the boundary between the hypocotyl and root. Expressed in cotyledons, young leaves, trichomes and flowers.

It is found in the cytoplasm. Its subcellular location is the cytoskeleton. The protein resides in the spindle. The protein localises to the phragmoplast. In terms of biological role, acts as a plus-end microtubule-dependent motor protein. Involved in the control of root hair tip growth by promoting microtubule depolymerization and limiting the accumulation of endoplasmic microtubules. In vitro, binds to polymerized actin through ARM repeats, and to polymerized tubulin through N-terminal motor domain. This chain is Kinesin-like protein KIN-UC, found in Arabidopsis thaliana (Mouse-ear cress).